We begin with the raw amino-acid sequence, 333 residues long: Transaldolase (333 aa).

Lys135 acts as the Schiff-base intermediate with substrate in catalysis.

This sequence belongs to the transaldolase family. Type 1 subfamily. In terms of assembly, homodimer.

It localises to the cytoplasm. The enzyme catalyses D-sedoheptulose 7-phosphate + D-glyceraldehyde 3-phosphate = D-erythrose 4-phosphate + beta-D-fructose 6-phosphate. It functions in the pathway carbohydrate degradation; pentose phosphate pathway; D-glyceraldehyde 3-phosphate and beta-D-fructose 6-phosphate from D-ribose 5-phosphate and D-xylulose 5-phosphate (non-oxidative stage): step 2/3. Its function is as follows. Transaldolase is important for the balance of metabolites in the pentose-phosphate pathway. The polypeptide is Transaldolase (Prochlorococcus marinus (strain MIT 9301)).